The chain runs to 303 residues: Probable cat1 operon transcriptional activator (303 aa).

The region spanning 1–58 (MDLRQFRYFVAVARERNFTRAARQLNIAQPPLSRQIQLLEEEVGVPLLIRNSRPVQLT) is the HTH lysR-type domain. The segment at residues 18–37 (FTRAARQLNIAQPPLSRQIQ) is a DNA-binding region (H-T-H motif).

This sequence belongs to the LysR transcriptional regulatory family.

Its function is as follows. Probable positive regulator of the cat1 operon which encode enzymes responsible for the degradation of catechol to acetyl-CoA via the beta-ketoadipate pathway. This chain is Probable cat1 operon transcriptional activator, found in Acinetobacter lwoffii.